Consider the following 62-residue polypeptide: MAKKLEITLTRSLIGRPSDQRVTVNTLGLRKLHQTVVQEDNAAIRGMVNKVKHLITVNEIDA.

This sequence belongs to the universal ribosomal protein uL30 family. In terms of assembly, part of the 50S ribosomal subunit.

In Shouchella clausii (strain KSM-K16) (Alkalihalobacillus clausii), this protein is Large ribosomal subunit protein uL30.